The primary structure comprises 999 residues: Desmoglein-3 (999 aa).

The signal sequence occupies residues 1 to 23; it reads MMGLFPRTTGALAIFVVVILVHG. A propeptide spanning residues 24 to 49 is cleaved from the precursor; the sequence is ELRIETKGQYDEEEMTMQQAKRRQKR. Cadherin domains follow at residues 50–158, 159–268, 269–383, and 386–499; these read EWVK…PVFS, QQIF…PMFR, DSQY…GIAF, and ASKT…VLEK. Residues 50–615 lie on the Extracellular side of the membrane; it reads EWVKFAKPCR…TRYGRPHSGR (566 aa). Residues Asn110 and Asn180 are each glycosylated (N-linked (GlcNAc...) asparagine). 2 N-linked (GlcNAc...) asparagine glycosylation sites follow: Asn459 and Asn545. A helical membrane pass occupies residues 616–640; that stretch reads LGPAAIGLLLLGLLLLLLAPLLLLT. Topologically, residues 641–999 are cytoplasmic; that stretch reads CDCGAGSTGG…CTEDPCSRLI (359 aa). Residues 642–714 are required for interaction with CTNND1 and localization at cell-cell junctions; that stretch reads DCGAGSTGGV…NTYARGTAVE (73 aa). Desmoglein repeat repeat units follow at residues 910–935 and 936–966; these read LSTS…LVTE and TYSA…ERVI.

Homodimer. Part of a complex that contains DSG3, PKP1, YAP1 and YWHAG; the complex is required for localization of DSG3 and YAP1 to the cell membrane in keratinocytes. Interacts with PKP2. Interacts with CTNND1; the interaction facilitates DSG3 localization and retention at cell-cell junctions. Interacts with CDH1; the interaction is required for CDH1 localization to developing adherens junctions. Interacts with RAC1; the interaction is required for DSG3 translocation to cell-cell junctions, organization of cortical F-actin bundles and actin anchoring at cell-cell junctions. Interacts with DSC3; the interaction may limit the interaction of DSC3 with p38MAPK family members and therefore repress p38MAPK signaling activation. In terms of tissue distribution, expressed throughout the basal and spinous layer of the epidermis with weak expression in the granular layer (at protein level). Expressed in skin and mucosa (at protein level). Expressed in the basal layer of the outer root sheath of the telogen hair club, specifically at the cell membrane between the apex of the cells and the surrounding hair club (at protein level). Expression is less abundant between the lateral margins of the outer root sheath basal cells (at protein level). Also expressed in the tongue, tonsil and esophagus.

It is found in the cell membrane. It localises to the cell junction. Its subcellular location is the desmosome. The protein resides in the cytoplasm. The protein localises to the tight junction. Functionally, a component of desmosome cell-cell junctions which are required for positive regulation of cellular adhesion. Required for adherens and desmosome junction assembly in response to mechanical force in keratinocytes. Required for desmosome-mediated cell-cell adhesion of cells surrounding the telogen hair club and the basal layer of the outer root sheath epithelium, consequently is essential for the anchoring of telogen hairs in the hair follicle. Required for the maintenance of the epithelial barrier via promoting desmosome-mediated intercellular attachment of suprabasal epithelium to basal cells. May play a role in the protein stability of the desmosome plaque components DSP, JUP, PKP1, PKP2 and PKP3. Required for YAP1 localization at the plasma membrane in keratinocytes in response to mechanical strain, via the formation of an interaction complex composed of DSG3, PKP1 and YWHAG. May also be involved in the positive regulation of YAP1 target gene transcription and as a result cell proliferation. Positively regulates cellular contractility and cell junction formation via organization of cortical F-actin bundles and anchoring of actin to tight junctions, in conjunction with RAC1. The cytoplasmic pool of DSG3 is required for the localization of CDH1 and CTNNB1 at developing adherens junctions, potentially via modulation of SRC activity. Inhibits keratinocyte migration via suppression of p38MAPK signaling, may therefore play a role in moderating wound healing. In Homo sapiens (Human), this protein is Desmoglein-3.